Consider the following 152-residue polypeptide: Transcriptional repressor NrdR (152 aa).

A zinc finger lies at 3-34 (CCYCGHGESKVLETRSAEEGRVIRRRRECMEC). The ATP-cone domain maps to 49–139 (LIVRKKGGSL…VYRQFTDVGR (91 aa)).

It belongs to the NrdR family. It depends on Zn(2+) as a cofactor.

In terms of biological role, negatively regulates transcription of bacterial ribonucleotide reductase nrd genes and operons by binding to NrdR-boxes. This Heliobacterium modesticaldum (strain ATCC 51547 / Ice1) protein is Transcriptional repressor NrdR.